Reading from the N-terminus, the 211-residue chain is Probable oligoribonuclease (211 aa).

The 165-residue stretch at isoleucine 38 to leucine 202 folds into the Exonuclease domain. Tyrosine 159 is an active-site residue.

This sequence belongs to the oligoribonuclease family.

In terms of biological role, 3'-to-5' exoribonuclease specific for small oligoribonucleotides. This chain is Probable oligoribonuclease, found in Drosophila melanogaster (Fruit fly).